The chain runs to 585 residues: Lipoprotein LpqB (585 aa).

The first 17 residues, 1–17, serve as a signal peptide directing secretion; sequence MGRKLLGLLMLAVLLAG. Cysteine 18 carries the N-palmitoyl cysteine lipid modification. Residue cysteine 18 is the site of S-diacylglycerol cysteine attachment. 2 disordered regions span residues 24-48 and 560-585; these read SSAPQAIGTVERPAPSNLPKPTPGM and PSADGQQGWSEVPGLTVPGAAPVLPG.

The protein belongs to the LpqB lipoprotein family.

It localises to the cell membrane. This is Lipoprotein LpqB from Mycolicibacterium paratuberculosis (strain ATCC BAA-968 / K-10) (Mycobacterium paratuberculosis).